We begin with the raw amino-acid sequence, 287 residues long: Phosphoribosylaminoimidazole-succinocarboxamide synthase (287 aa).

This sequence belongs to the SAICAR synthetase family.

The enzyme catalyses 5-amino-1-(5-phospho-D-ribosyl)imidazole-4-carboxylate + L-aspartate + ATP = (2S)-2-[5-amino-1-(5-phospho-beta-D-ribosyl)imidazole-4-carboxamido]succinate + ADP + phosphate + 2 H(+). Its pathway is purine metabolism; IMP biosynthesis via de novo pathway; 5-amino-1-(5-phospho-D-ribosyl)imidazole-4-carboxamide from 5-amino-1-(5-phospho-D-ribosyl)imidazole-4-carboxylate: step 1/2. The protein is Phosphoribosylaminoimidazole-succinocarboxamide synthase of Neisseria meningitidis serogroup C (strain 053442).